The following is a 233-amino-acid chain: Pyridoxine 5'-phosphate synthase (233 aa).

Residue asparagine 6 coordinates 3-amino-2-oxopropyl phosphate. Residue aspartate 8–histidine 9 coordinates 1-deoxy-D-xylulose 5-phosphate. Arginine 17 provides a ligand contact to 3-amino-2-oxopropyl phosphate. The Proton acceptor role is filled by histidine 42. 2 residues coordinate 1-deoxy-D-xylulose 5-phosphate: arginine 44 and histidine 49. Residue glutamate 69 is the Proton acceptor of the active site. Residue threonine 99 participates in 1-deoxy-D-xylulose 5-phosphate binding. The active-site Proton donor is histidine 186. 3-amino-2-oxopropyl phosphate contacts are provided by residues glycine 187 and glycine 208–histidine 209.

It belongs to the PNP synthase family. As to quaternary structure, homooctamer; tetramer of dimers.

The protein localises to the cytoplasm. The catalysed reaction is 3-amino-2-oxopropyl phosphate + 1-deoxy-D-xylulose 5-phosphate = pyridoxine 5'-phosphate + phosphate + 2 H2O + H(+). The protein operates within cofactor biosynthesis; pyridoxine 5'-phosphate biosynthesis; pyridoxine 5'-phosphate from D-erythrose 4-phosphate: step 5/5. Functionally, catalyzes the complicated ring closure reaction between the two acyclic compounds 1-deoxy-D-xylulose-5-phosphate (DXP) and 3-amino-2-oxopropyl phosphate (1-amino-acetone-3-phosphate or AAP) to form pyridoxine 5'-phosphate (PNP) and inorganic phosphate. This Anaplasma phagocytophilum (strain HZ) protein is Pyridoxine 5'-phosphate synthase.